A 242-amino-acid chain; its full sequence is Large ribosomal subunit protein uL1 (242 aa).

Belongs to the universal ribosomal protein uL1 family. In terms of assembly, part of the 50S ribosomal subunit.

Its function is as follows. Binds directly to 23S rRNA. The L1 stalk is quite mobile in the ribosome, and is involved in E site tRNA release. Functionally, protein L1 is also a translational repressor protein, it controls the translation of the L11 operon by binding to its mRNA. In Sulfurihydrogenibium sp. (strain YO3AOP1), this protein is Large ribosomal subunit protein uL1.